A 2080-amino-acid chain; its full sequence is Dedicator of cytokinesis protein 6 (2080 aa).

Residues 20–31 (EVRKQVSRERSG) show a composition bias toward basic and acidic residues. 3 disordered regions span residues 20–44 (EVRK…SSLG), 156–189 (QDTP…SGAS), and 408–441 (PQDR…GDDA). Residues 32–42 (SPHSSRRSSSS) show a composition bias toward low complexity. Position 178 is a phosphoserine (Ser178). The segment covering 408–425 (PQDRDSDSEGERRPTWAE) has biased composition (basic and acidic residues). In terms of domain architecture, C2 DOCK-type spans 546–712 (RNLLFVYPHS…GVFSVELTAV (167 aa)). An Omega-N-methylarginine modification is found at Arg863. Residues Ser870, Ser878, and Ser882 each carry the phosphoserine modification. The tract at residues 1101-1123 (ASPSPSVSSTTSQSSTFSSQAPD) is disordered. A compositionally biased stretch (low complexity) spans 1104-1122 (SPSVSSTTSQSSTFSSQAP). Position 1341 is a phosphoserine (Ser1341). The DOCKER domain maps to 1620–2056 (RGYQGSPDLR…LQPLLTQRLP (437 aa)). Thr2064 is subject to Phosphothreonine. Ser2065 and Ser2069 each carry phosphoserine.

It belongs to the DOCK family. As to expression, widely expressed with highest levels in lung and heart.

It localises to the cytoplasm. The protein resides in the perinuclear region. Its function is as follows. Acts as a guanine nucleotide exchange factor (GEF) for CDC42 and RAC1 small GTPases. Through its activation of CDC42 and RAC1, regulates neurite outgrowth in an vitro differentiation system. The protein is Dedicator of cytokinesis protein 6 (Dock6) of Mus musculus (Mouse).